The chain runs to 347 residues: Isopentenyl-diphosphate delta-isomerase (347 aa).

9–10 contributes to the substrate binding site; it reads RK. Residues 65–67, Ser-95, and Asn-124 contribute to the FMN site; that span reads AMT. Substrate is bound at residue 95-97; that stretch reads STH. Residue Gln-154 coordinates substrate. Glu-155 is a Mg(2+) binding site. FMN-binding positions include Lys-186, Ser-211, Thr-216, 262–264, and 283–284; these read GVR and SR.

Belongs to the IPP isomerase type 2 family. As to quaternary structure, homooctamer. Dimer of tetramers. FMN serves as cofactor. It depends on NADPH as a cofactor. Mg(2+) is required as a cofactor.

It localises to the cytoplasm. It carries out the reaction isopentenyl diphosphate = dimethylallyl diphosphate. Its function is as follows. Involved in the biosynthesis of isoprenoids. Catalyzes the 1,3-allylic rearrangement of the homoallylic substrate isopentenyl (IPP) to its allylic isomer, dimethylallyl diphosphate (DMAPP). The sequence is that of Isopentenyl-diphosphate delta-isomerase from Staphylococcus saprophyticus subsp. saprophyticus (strain ATCC 15305 / DSM 20229 / NCIMB 8711 / NCTC 7292 / S-41).